The chain runs to 545 residues: Glucose starvation modulator protein 1 (545 aa).

Positions 20 to 48 (CGFCHEKHLQCDVGRPCQNCRKRNIASFC) form a DNA-binding region, zn(2)-C6 fungal-type. Basic residues predominate over residues 51–60 (KVKRRRKRKR). Disordered stretches follow at residues 51 to 131 (KVKR…AMKD) and 228 to 270 (YISL…WQQQ). Residues 61–71 (SDASNFDKDEA) are compositionally biased toward basic and acidic residues. The span at 72–92 (ATQTLNFNTVNPGEGSSSAMT) shows a compositional bias: polar residues. Low complexity predominate over residues 98-110 (TGTTTATTTRTTT). Polar residues predominate over residues 111–125 (NFRSESKASSSTENI). Residues 257–270 (QQKESQQMQLWQQQ) are compositionally biased toward low complexity. One can recognise a PAS domain in the interval 416–486 (ELENMSKLVN…DLFHEHLAFG (71 aa)).

This sequence belongs to the ERT1/acuK family.

Its subcellular location is the nucleus. In terms of biological role, transcription factor which regulates nonfermentable carbon utilization. The sequence is that of Glucose starvation modulator protein 1 (GSM1) from Zygosaccharomyces rouxii (strain ATCC 2623 / CBS 732 / NBRC 1130 / NCYC 568 / NRRL Y-229).